Reading from the N-terminus, the 212-residue chain is Methylthioribulose-1-phosphate dehydratase (212 aa).

Residues His97 and His99 each contribute to the Zn(2+) site.

Belongs to the aldolase class II family. MtnB subfamily. Homotetramer. The cofactor is Zn(2+).

The catalysed reaction is 5-(methylsulfanyl)-D-ribulose 1-phosphate = 5-methylsulfanyl-2,3-dioxopentyl phosphate + H2O. The protein operates within amino-acid biosynthesis; L-methionine biosynthesis via salvage pathway; L-methionine from S-methyl-5-thio-alpha-D-ribose 1-phosphate: step 2/6. In terms of biological role, catalyzes the dehydration of methylthioribulose-1-phosphate (MTRu-1-P) into 2,3-diketo-5-methylthiopentyl-1-phosphate (DK-MTP-1-P). The sequence is that of Methylthioribulose-1-phosphate dehydratase from Bacillus cereus (strain ZK / E33L).